The following is a 117-amino-acid chain: Large ribosomal subunit protein bL20 (117 aa).

This sequence belongs to the bacterial ribosomal protein bL20 family.

Binds directly to 23S ribosomal RNA and is necessary for the in vitro assembly process of the 50S ribosomal subunit. It is not involved in the protein synthesizing functions of that subunit. This Limosilactobacillus reuteri (strain DSM 20016) (Lactobacillus reuteri) protein is Large ribosomal subunit protein bL20.